The following is a 293-amino-acid chain: Pyridoxal 5'-phosphate synthase subunit PdxS (293 aa).

D23 contacts D-ribose 5-phosphate. The Schiff-base intermediate with D-ribose 5-phosphate role is filled by K80. Position 152 (G152) interacts with D-ribose 5-phosphate. R164 contacts D-glyceraldehyde 3-phosphate. Residues G213 and 234–235 contribute to the D-ribose 5-phosphate site; that span reads GS.

Belongs to the PdxS/SNZ family. In the presence of PdxT, forms a dodecamer of heterodimers.

The enzyme catalyses aldehydo-D-ribose 5-phosphate + D-glyceraldehyde 3-phosphate + L-glutamine = pyridoxal 5'-phosphate + L-glutamate + phosphate + 3 H2O + H(+). It functions in the pathway cofactor biosynthesis; pyridoxal 5'-phosphate biosynthesis. Its function is as follows. Catalyzes the formation of pyridoxal 5'-phosphate from ribose 5-phosphate (RBP), glyceraldehyde 3-phosphate (G3P) and ammonia. The ammonia is provided by the PdxT subunit. Can also use ribulose 5-phosphate and dihydroxyacetone phosphate as substrates, resulting from enzyme-catalyzed isomerization of RBP and G3P, respectively. This chain is Pyridoxal 5'-phosphate synthase subunit PdxS, found in Herpetosiphon aurantiacus (strain ATCC 23779 / DSM 785 / 114-95).